A 187-amino-acid chain; its full sequence is Reactive Intermediate Deaminase A, chloroplastic (187 aa).

The N-terminal 58 residues, 1–58 (MTWSVFRSINTPTLDLSTALRSTRTPLVAAGVGCATFAGVSLFRMSSRSPPFASLSVS), are a transit peptide targeting the chloroplast. Position 165 (Arg165) interacts with substrate.

Belongs to the RutC family. In terms of tissue distribution, expressed in leaves, petiols, petals, carpels and shoot apex.

The protein resides in the plastid. It is found in the chloroplast. The catalysed reaction is 2-iminobutanoate + H2O = 2-oxobutanoate + NH4(+). It catalyses the reaction 2-iminopropanoate + H2O = pyruvate + NH4(+). It participates in amino-acid biosynthesis; L-isoleucine biosynthesis; 2-oxobutanoate from L-threonine. Hydrolyzes the Ser-derived enamine/imine product of Thr dehydratase, protecting the plastidial branched-chain aminotransferase BCAT3 (AC Q9M401) from inactivation. Involved in Ile biosynthesis. The chain is Reactive Intermediate Deaminase A, chloroplastic from Arabidopsis thaliana (Mouse-ear cress).